A 405-amino-acid polypeptide reads, in one-letter code: Mucosal addressin cell adhesion molecule 1 (405 aa).

Positions 1–21 (MESILALLLALALVPYQLSRG) are cleaved as a signal peptide. Ig-like domains are found at residues 22-109 (QSFQ…ILVY) and 110-227 (AFPD…TSPK). Residues 22 to 364 (QSFQVNPPES…PGQVTPNSSS (343 aa)) lie on the Extracellular side of the membrane. Disulfide bonds link C45-C91, C49-C95, and C132-C200. The interval 221–257 (QSQTSPKPPNTTSAEPYILTSSSTAEAVSTGLNITTL) is mucin-like. N-linked (GlcNAc...) asparagine glycosylation is found at N230 and N253. The disordered stretch occupies residues 255-275 (TTLPSAPPYPKLSPRTLSSEG). An Ig-like 3 domain is found at 258 to 357 (PSAPPYPKLS…EVTNLYVPGQ (100 aa)). A disulfide bridge connects residues C293 and C341. Residue N361 is glycosylated (N-linked (GlcNAc...) asparagine). Residues 365–385 (TVVLWIGSLVLGLLALVFLAY) form a helical membrane-spanning segment. Residues 386-405 (RLWKCYRPGPRPDTSSCTHL) are Cytoplasmic-facing.

In terms of assembly, homodimer. Post-translationally, O-glycosylated; contains syalic acid. The Ser/Thr-rich mucin-like domain may provide possible sites for O-glycosylation. As to expression, highly expressed on high endothelial venules (HEV) of organized intestinal lymphoid tissues like the Peyer patches and mesenteric lymph nodes, and in the lamina propria of the intestine. Some expression found in the spleen, and low levels of expression in the peripheral lymph nodes and the lactating mammary gland. No expression was detected in the liver, kidneys, lungs or in normal brain. Expressed as well in brain endothelioma cells, and mucosal tissues which are in a chronic state of inflammation, such as inflamed pancreas.

The protein localises to the membrane. Its function is as follows. Cell adhesion leukocyte receptor expressed by mucosal venules, helps to direct lymphocyte traffic into mucosal tissues including the Peyer patches and the intestinal lamina propria. It can bind both the integrin alpha-4/beta-7 and L-selectin, regulating both the passage and retention of leukocytes. Both isoform 1 and isoform 2 can adhere to integrin alpha-4/beta-7. Isoform 2, lacking the mucin-like domain, may be specialized in supporting integrin alpha-4/beta-7-dependent adhesion strengthening, independent of L-selectin binding. This chain is Mucosal addressin cell adhesion molecule 1 (Madcam1), found in Mus musculus (Mouse).